A 217-amino-acid chain; its full sequence is Large ribosomal subunit protein uL3 (217 aa).

The interval 129 to 162 (SRGPMSHGSKNHRAPGSTGAGTTPGRIYPGKRMA) is disordered. Residues 142 to 153 (APGSTGAGTTPG) show a composition bias toward low complexity.

This sequence belongs to the universal ribosomal protein uL3 family. Part of the 50S ribosomal subunit. Forms a cluster with proteins L14 and L19.

In terms of biological role, one of the primary rRNA binding proteins, it binds directly near the 3'-end of the 23S rRNA, where it nucleates assembly of the 50S subunit. The protein is Large ribosomal subunit protein uL3 of Prochlorococcus marinus (strain MIT 9215).